The sequence spans 791 residues: Endonuclease MutS2 (791 aa).

337–344 is a binding site for ATP; sequence GPNTGGKT. The disordered stretch occupies residues 689–715; that stretch reads AAQASQKKPEKSVRSSRGLRSSRASSE. Positions 703-713 are enriched in low complexity; it reads SSRGLRSSRAS. A Smr domain is found at 716–791; sequence LDLRGQRYEE…GTGATIVNLQ (76 aa).

The protein belongs to the DNA mismatch repair MutS family. MutS2 subfamily. As to quaternary structure, homodimer. Binds to stalled ribosomes, contacting rRNA.

Endonuclease that is involved in the suppression of homologous recombination and thus may have a key role in the control of bacterial genetic diversity. Functionally, acts as a ribosome collision sensor, splitting the ribosome into its 2 subunits. Detects stalled/collided 70S ribosomes which it binds and splits by an ATP-hydrolysis driven conformational change. Acts upstream of the ribosome quality control system (RQC), a ribosome-associated complex that mediates the extraction of incompletely synthesized nascent chains from stalled ribosomes and their subsequent degradation. Probably generates substrates for RQC. This is Endonuclease MutS2 from Lactobacillus gasseri (strain ATCC 33323 / DSM 20243 / BCRC 14619 / CIP 102991 / JCM 1131 / KCTC 3163 / NCIMB 11718 / NCTC 13722 / AM63).